Reading from the N-terminus, the 267-residue chain is MTNNTDKQTLKKLERQILRKTAQAINQYNMIEDGDKIMVCLSGGKDSYCLLEMLLLLQKKAPISFEIIAVNLDQKQPGFPEEVLPNYLKNKGVEFHIIERDTYSIVKRVIPEGKTTCGLCSRMRRGILYDFAEENNVTKVALGHHRDDIIETFFLNLFYNGSIKAMPAKLLSDDKRNIVIRPLAFVSEKETLEYSQLKEFPIIPCNLCGSQDNLQRVFIKDMLNRWEQNNPERKNVIFKALSNISPSQMLDKELFDFINISKDDIQR.

A PP-loop motif motif is present at residues 42-47 (SGGKDS). [4Fe-4S] cluster contacts are provided by cysteine 117, cysteine 120, and cysteine 208.

Belongs to the TtcA family. Homodimer. It depends on Mg(2+) as a cofactor. [4Fe-4S] cluster is required as a cofactor.

It localises to the cytoplasm. It carries out the reaction cytidine(32) in tRNA + S-sulfanyl-L-cysteinyl-[cysteine desulfurase] + AH2 + ATP = 2-thiocytidine(32) in tRNA + L-cysteinyl-[cysteine desulfurase] + A + AMP + diphosphate + H(+). It functions in the pathway tRNA modification. Its function is as follows. Catalyzes the ATP-dependent 2-thiolation of cytidine in position 32 of tRNA, to form 2-thiocytidine (s(2)C32). The sulfur atoms are provided by the cysteine/cysteine desulfurase (IscS) system. The polypeptide is tRNA-cytidine(32) 2-sulfurtransferase 1 (Francisella tularensis subsp. tularensis (strain FSC 198)).